The following is a 239-amino-acid chain: Ribose-5-phosphate isomerase A (239 aa).

Residues 40-43 (SGST), 96-99 (DGAD), and 110-113 (KGGG) contribute to the substrate site. Glu-119 functions as the Proton acceptor in the catalytic mechanism. Lys-137 is a substrate binding site.

It belongs to the ribose 5-phosphate isomerase family. Homodimer.

The enzyme catalyses aldehydo-D-ribose 5-phosphate = D-ribulose 5-phosphate. The protein operates within carbohydrate degradation; pentose phosphate pathway; D-ribose 5-phosphate from D-ribulose 5-phosphate (non-oxidative stage): step 1/1. Its function is as follows. Catalyzes the reversible conversion of ribose-5-phosphate to ribulose 5-phosphate. This Methanococcus vannielii (strain ATCC 35089 / DSM 1224 / JCM 13029 / OCM 148 / SB) protein is Ribose-5-phosphate isomerase A.